The chain runs to 590 residues: Aspartate--tRNA(Asp/Asn) ligase (590 aa).

Residue Glu-169 participates in L-aspartate binding. The interval 193-196 (QLFK) is aspartate. Arg-215 contacts L-aspartate. ATP contacts are provided by residues 215–217 (RDE) and Gln-224. His-447 is an L-aspartate binding site. An ATP-binding site is contributed by Glu-479. Arg-486 is an L-aspartate binding site. 531-534 (GWDR) is an ATP binding site. Positions 556-590 (GGFDPLTAAPAPITPEQRKEAGVDARPQQDLPPQS) are disordered.

This sequence belongs to the class-II aminoacyl-tRNA synthetase family. Type 1 subfamily. Homodimer.

Its subcellular location is the cytoplasm. The catalysed reaction is tRNA(Asx) + L-aspartate + ATP = L-aspartyl-tRNA(Asx) + AMP + diphosphate. Aspartyl-tRNA synthetase with relaxed tRNA specificity since it is able to aspartylate not only its cognate tRNA(Asp) but also tRNA(Asn). Reaction proceeds in two steps: L-aspartate is first activated by ATP to form Asp-AMP and then transferred to the acceptor end of tRNA(Asp/Asn). In Nocardioides sp. (strain ATCC BAA-499 / JS614), this protein is Aspartate--tRNA(Asp/Asn) ligase.